A 336-amino-acid polypeptide reads, in one-letter code: MDYPTLLLALLHVYRALCEEVLWHTSVPFAENMSLECVYPSVGILTQVEWFKIGTEKDSIAIFSPTHGMVIRKPYAERVYFLNSTMASNNMTLFFRNASEDDVGYYSCSLYTYPQGTWQKVIQVVQSDGFEAAVPPNSHIVSEPGKNITLTCQPQMTWPVQEVRWEKIQPHQIDLLTYCDLVHGRNFTSKFPRQIVSNCSHGSWSFIVVPDVTASDSGLYRCHLQASAGENETFVMRLTVAEGQTDNQYTRFVTGGTVLLLLFVISITTIIVIFLNRRRRRERSDLYTESWDTQKAPKNYRSPISASQPTNQSMDDTREDIYVNYPTFSRRPKTRV.

The signal sequence occupies residues Met-1–Cys-18. 2 consecutive Ig-like C2-type domains span residues Glu-19 to Gln-126 and Pro-135 to Thr-239. Residues Glu-19–Thr-254 are Extracellular-facing. N-linked (GlcNAc...) asparagine glycans are attached at residues Asn-32, Asn-83, Asn-90, Asn-97, Asn-147, Asn-186, Asn-198, and Asn-231. Residues Cys-37 and Cys-108 are joined by a disulfide bond. Intrachain disulfides connect Cys-152-Cys-222 and Cys-179-Cys-199. Residues Gly-255–Leu-275 traverse the membrane as a helical segment. The Cytoplasmic segment spans residues Asn-276–Val-336. The disordered stretch occupies residues Lys-298–Glu-319. Residues Ser-302–Met-314 show a composition bias toward polar residues. Tyr-322 carries the phosphotyrosine modification.

As to quaternary structure, interacts with PVR and NECTIN2. Competes with PVRIG for NECTIN2-binding. Interacts with ITGAL; this interaction mediates CD226 localization to lipid rafts. In terms of processing, phosphorylated.

The protein resides in the cell membrane. Its function is as follows. Cell surface receptor that plays an important role in the immune system, particularly in intercellular adhesion, lymphocyte signaling, cytotoxicity and lymphokine secretion mediated by cytotoxic T-cells and NK cells. Functions as a costimulatory receptor upon recognition of target cells, such as virus-infected or tumor cells. Upon binding to its ligands PVR/CD155 or NECTIN2/CD112 on target cells, promotes the cytotoxic activity of NK cells and CTLs, enhancing their ability to kill these cells. Mechanistically, phosphorylation by Src kinases such as LYN of FYN, enables binding to adapter GRB2, leading to activation of VAV1, PI3K and PLCG1. Promotes also activation of kinases ERK and AKT, as well as calcium fluxes. This Macaca mulatta (Rhesus macaque) protein is CD226 antigen (CD226).